The primary structure comprises 359 residues: Phosphate acyltransferase (359 aa).

The tract at residues 335–359 is disordered; sequence SGAGGAATGSPETDAPNPHPDSRAA.

The protein belongs to the PlsX family. In terms of assembly, homodimer. Probably interacts with PlsY.

Its subcellular location is the cytoplasm. It carries out the reaction a fatty acyl-[ACP] + phosphate = an acyl phosphate + holo-[ACP]. Its pathway is lipid metabolism; phospholipid metabolism. Its function is as follows. Catalyzes the reversible formation of acyl-phosphate (acyl-PO(4)) from acyl-[acyl-carrier-protein] (acyl-ACP). This enzyme utilizes acyl-ACP as fatty acyl donor, but not acyl-CoA. In Cupriavidus metallidurans (strain ATCC 43123 / DSM 2839 / NBRC 102507 / CH34) (Ralstonia metallidurans), this protein is Phosphate acyltransferase.